Reading from the N-terminus, the 314-residue chain is Hydrolase 4 (314 aa).

The Involved in the stabilization of the negatively charged intermediate by the formation of the oxyanion hole motif lies at 73 to 75 (HGA). Catalysis depends on residues Ser-165 and Asp-260.

This sequence belongs to the 'GDXG' lipolytic enzyme family.

Its pathway is alkaloid biosynthesis. Functionally, component of the seco-iridoid and derivatives monoterpenoid indole alkaloids (MIAs, e.g. vincadifformine) biosynthesis pathway. Catalyzes the conversion of O-acetylstemmadenine (OAS) to vincadifformine. May also trigger the formation of additional unknown MIAs. In Catharanthus roseus (Madagascar periwinkle), this protein is Hydrolase 4.